The chain runs to 155 residues: 3-hydroxyacyl-[acyl-carrier-protein] dehydratase FabZ (155 aa).

Residue H59 is part of the active site.

Belongs to the thioester dehydratase family. FabZ subfamily.

It is found in the cytoplasm. It catalyses the reaction a (3R)-hydroxyacyl-[ACP] = a (2E)-enoyl-[ACP] + H2O. Its function is as follows. Involved in unsaturated fatty acids biosynthesis. Catalyzes the dehydration of short chain beta-hydroxyacyl-ACPs and long chain saturated and unsaturated beta-hydroxyacyl-ACPs. This Bartonella henselae (strain ATCC 49882 / DSM 28221 / CCUG 30454 / Houston 1) (Rochalimaea henselae) protein is 3-hydroxyacyl-[acyl-carrier-protein] dehydratase FabZ.